A 222-amino-acid chain; its full sequence is N-(5'-phosphoribosyl)anthranilate isomerase (222 aa).

This sequence belongs to the TrpF family.

The catalysed reaction is N-(5-phospho-beta-D-ribosyl)anthranilate = 1-(2-carboxyphenylamino)-1-deoxy-D-ribulose 5-phosphate. It functions in the pathway amino-acid biosynthesis; L-tryptophan biosynthesis; L-tryptophan from chorismate: step 3/5. In Xanthomonas oryzae pv. oryzae (strain PXO99A), this protein is N-(5'-phosphoribosyl)anthranilate isomerase.